A 650-amino-acid polypeptide reads, in one-letter code: Acetyl-coenzyme A synthetase (650 aa).

Residues 191–194, threonine 311, and asparagine 335 each bind CoA; that span reads RGGR. ATP-binding positions include 387–389, 411–416, aspartate 500, and arginine 515; these read GEP and DTWWQT. Serine 523 provides a ligand contact to CoA. Arginine 526 serves as a coordination point for ATP. Mg(2+) contacts are provided by valine 537, histidine 539, and valine 542. Residue arginine 584 coordinates CoA. Lysine 609 is subject to N6-acetyllysine.

This sequence belongs to the ATP-dependent AMP-binding enzyme family. Mg(2+) serves as cofactor. In terms of processing, acetylated. Deacetylation by the SIR2-homolog deacetylase activates the enzyme.

It catalyses the reaction acetate + ATP + CoA = acetyl-CoA + AMP + diphosphate. Functionally, catalyzes the conversion of acetate into acetyl-CoA (AcCoA), an essential intermediate at the junction of anabolic and catabolic pathways. AcsA undergoes a two-step reaction. In the first half reaction, AcsA combines acetate with ATP to form acetyl-adenylate (AcAMP) intermediate. In the second half reaction, it can then transfer the acetyl group from AcAMP to the sulfhydryl group of CoA, forming the product AcCoA. This is Acetyl-coenzyme A synthetase from Shewanella baltica (strain OS155 / ATCC BAA-1091).